The following is a 602-amino-acid chain: Aspartate--tRNA(Asp/Asn) ligase (602 aa).

E177 contributes to the L-aspartate binding site. The aspartate stretch occupies residues 201-204 (QLFK). R223 serves as a coordination point for L-aspartate. Residues 223-225 (RDE) and Q232 each bind ATP. H460 is an L-aspartate binding site. E497 serves as a coordination point for ATP. R504 provides a ligand contact to L-aspartate. 549–552 (GLDR) lines the ATP pocket.

It belongs to the class-II aminoacyl-tRNA synthetase family. Type 1 subfamily. In terms of assembly, homodimer.

It is found in the cytoplasm. It catalyses the reaction tRNA(Asx) + L-aspartate + ATP = L-aspartyl-tRNA(Asx) + AMP + diphosphate. Its function is as follows. Aspartyl-tRNA synthetase with relaxed tRNA specificity since it is able to aspartylate not only its cognate tRNA(Asp) but also tRNA(Asn). Reaction proceeds in two steps: L-aspartate is first activated by ATP to form Asp-AMP and then transferred to the acceptor end of tRNA(Asp/Asn). The sequence is that of Aspartate--tRNA(Asp/Asn) ligase from Prochlorococcus marinus (strain MIT 9515).